We begin with the raw amino-acid sequence, 668 residues long: Tastin (668 aa).

Disordered regions lie at residues 1 to 102 (MTTL…GGSN), 154 to 177 (ERKG…PRIP), and 189 to 285 (FSRL…GRHH). Ser16 bears the Phosphoserine mark. Composition is skewed to polar residues over residues 27–37 (QRCQDFSSVKS) and 55–64 (PRSTQRQRPL). At Ser97 the chain carries Phosphoserine. Residues 158–168 (GTTQRGQSARS) are compositionally biased toward polar residues. A Phosphoserine modification is found at Ser169. Composition is skewed to basic and acidic residues over residues 227-246 (ELRR…DRRT) and 269-282 (GEQE…DGGG). Phosphoserine is present on residues Ser306, Ser324, and Ser338. Disordered regions lie at residues 364 to 392 (ITLQ…HQEL) and 462 to 502 (TEPL…AEPE).

In terms of assembly, directly binds bystin, and indirectly trophinin.

It is found in the cytoplasm. Functionally, could be involved with bystin and trophinin in a cell adhesion molecule complex that mediates an initial attachment of the blastocyst to uterine epithelial cells at the time of the embryo implantation. The protein is Tastin of Mus musculus (Mouse).